The sequence spans 214 residues: Holliday junction branch migration complex subunit RuvA (214 aa).

The segment at 1 to 63 is domain I; sequence MIASLSGTVE…EDALTLYGFA (63 aa). A domain II region spans residues 64–142; the sequence is DRDEREVFEV…PTGEPVPGAE (79 aa). A flexible linker region spans residues 143–151; sequence AEASDEPAV. Residues 151 to 214 are domain III; the sequence is VETVWHADVV…GMAGAVRGGR (64 aa).

Belongs to the RuvA family. In terms of assembly, homotetramer. Forms an RuvA(8)-RuvB(12)-Holliday junction (HJ) complex. HJ DNA is sandwiched between 2 RuvA tetramers; dsDNA enters through RuvA and exits via RuvB. An RuvB hexamer assembles on each DNA strand where it exits the tetramer. Each RuvB hexamer is contacted by two RuvA subunits (via domain III) on 2 adjacent RuvB subunits; this complex drives branch migration. In the full resolvosome a probable DNA-RuvA(4)-RuvB(12)-RuvC(2) complex forms which resolves the HJ.

Its subcellular location is the cytoplasm. Its function is as follows. The RuvA-RuvB-RuvC complex processes Holliday junction (HJ) DNA during genetic recombination and DNA repair, while the RuvA-RuvB complex plays an important role in the rescue of blocked DNA replication forks via replication fork reversal (RFR). RuvA specifically binds to HJ cruciform DNA, conferring on it an open structure. The RuvB hexamer acts as an ATP-dependent pump, pulling dsDNA into and through the RuvAB complex. HJ branch migration allows RuvC to scan DNA until it finds its consensus sequence, where it cleaves and resolves the cruciform DNA. In Micrococcus luteus (strain ATCC 4698 / DSM 20030 / JCM 1464 / CCM 169 / CCUG 5858 / IAM 1056 / NBRC 3333 / NCIMB 9278 / NCTC 2665 / VKM Ac-2230) (Micrococcus lysodeikticus), this protein is Holliday junction branch migration complex subunit RuvA.